The primary structure comprises 460 residues: Probable lipid II flippase MurJ (460 aa).

11 helical membrane-spanning segments follow: residues 4–24, 50–70, 95–115, 122–142, 155–175, 228–248, 257–277, 292–312, 336–356, 366–386, and 428–448; these read ILGA…PNLF, FASL…LLVA, IVAI…LGAL, FFAS…ALLI, LSYG…YPLV, IASF…VSYL, LPLA…IAIA, KAWF…IMLS, VFSL…FSLW, AAKI…SLMP, and LVIL…KSWV.

This sequence belongs to the MurJ/MviN family.

The protein localises to the cell inner membrane. It participates in cell wall biogenesis; peptidoglycan biosynthesis. Its function is as follows. Involved in peptidoglycan biosynthesis. Transports lipid-linked peptidoglycan precursors from the inner to the outer leaflet of the cytoplasmic membrane. This chain is Probable lipid II flippase MurJ, found in Helicobacter pylori (strain J99 / ATCC 700824) (Campylobacter pylori J99).